The primary structure comprises 239 residues: Peptidase E (239 aa).

Residues Ser-122, Asp-137, and His-159 each act as charge relay system in the active site.

This sequence belongs to the peptidase S51 family.

It is found in the cytoplasm. The enzyme catalyses Dipeptidase E catalyzes the hydrolysis of dipeptides Asp-|-Xaa. It does not act on peptides with N-terminal Glu, Asn or Gln, nor does it cleave isoaspartyl peptides.. Hydrolyzes dipeptides containing N-terminal aspartate residues. May play a role in allowing the cell to use peptide aspartate to spare carbon otherwise required for the synthesis of the aspartate family of amino acids. This chain is Peptidase E, found in Shewanella baltica (strain OS195).